Consider the following 405-residue polypeptide: MSQQTPQESEQTTAKEQDLDQESVLSNIDFNTDLNHNLNLSEYCISSDAGTEKMDSDEEKSLANLPELKYAPKLSSLVKQETLTESLKRPHEDEKEAIDEAKKMKVPGENEDESKEEEKSQELEEAIDSKEKSTDARDEQGDEGDNEEENNEEDNENENEHTAPPALVMPSPIEMEEQRMTALKEITDIEYKFAQLRQKLYDNQLVRLQTELQMCLEGSHPELQVYYSKIAAIRDYKLHRAYQRQKYELSCINTETIATRTFIHQDFHKKVTDLRARLLNRTTQTWYDINKERRDMDIVIPDVNYHVPIKLDNKTLSCITGYASAAQLCYPGEPVAEDLACESIEYRYRANPVDKLEVIVDRMRLNNEISDLEGLRKYFHSFPGAPELNPLRDSEINDDFHQWAQ.

Residues M1–T12 are compositionally biased toward low complexity. Disordered stretches follow at residues M1–S26 and A49–S171. S56 carries the phosphoserine modification. 2 stretches are compositionally biased toward basic and acidic residues: residues S86–G108 and E116–E139. S120 bears the Phosphoserine mark. Positions Q140 to N157 are enriched in acidic residues. S370 carries the post-translational modification Phosphoserine.

As to quaternary structure, component of the RPD3C(L) complex composed of at least ASH1, CTI6, DEP1, PHO23, RPD3, RXT2, RXT3, SAP30, SDS3, SIN3, UME1 and UME6.

The protein resides in the cytoplasm. It localises to the nucleus. Component of the RPD3C(L) histone deacetylase complex (HDAC) responsible for the deacetylation of lysine residues on the N-terminal part of the core histones (H2A, H2B, H3 and H4). Histone deacetylation gives a tag for epigenetic repression and plays an important role in transcriptional regulation, cell cycle progression and developmental events. The sequence is that of Transcriptional regulatory protein DEP1 (DEP1) from Saccharomyces cerevisiae (strain ATCC 204508 / S288c) (Baker's yeast).